Reading from the N-terminus, the 156-residue chain is Small ribosomal subunit protein uS7 (156 aa).

This sequence belongs to the universal ribosomal protein uS7 family. Part of the 30S ribosomal subunit. Contacts proteins S9 and S11.

One of the primary rRNA binding proteins, it binds directly to 16S rRNA where it nucleates assembly of the head domain of the 30S subunit. Is located at the subunit interface close to the decoding center, probably blocks exit of the E-site tRNA. This Parvibaculum lavamentivorans (strain DS-1 / DSM 13023 / NCIMB 13966) protein is Small ribosomal subunit protein uS7.